The following is a 518-amino-acid chain: Voltage-gated potassium channel regulatory subunit KCNG2 (518 aa).

The Cytoplasmic segment spans residues 1–214; that stretch reads MALLTGNADR…DMVENPHSGI (214 aa). Residues 215–236 form a helical membrane-spanning segment; that stretch reads PGKIFACISISFVAITAVSLCI. The Extracellular portion of the chain corresponds to 237–257; that stretch reads STMPDVREEEDRGECSQKCYD. A helical transmembrane segment spans residues 258–279; that stretch reads IFVLETVCVAWFSFEFLLRSIQ. Residues 280 to 290 lie on the Cytoplasmic side of the membrane; it reads AENKCAFLKTP. A helical membrane pass occupies residues 291-311; that stretch reads LNIIDILAILPFYISLIVDMA. Over 312-331 the chain is Extracellular; sequence STKNSSKPGGGAGNKYLERV. A helical; Voltage-sensor membrane pass occupies residues 332 to 352; it reads GLVLRFLRALRILYVMRLARH. Residues 353-367 lie on the Cytoplasmic side of the membrane; sequence SLGLQTLGLTVRRCT. A helical membrane pass occupies residues 368 to 389; the sequence is REFGLLLLFLCVAMALFSPLVY. Topologically, residues 390–404 are extracellular; the sequence is LAESELGAKQEFTSI. Positions 405–416 form an intramembrane region, helical; that stretch reads PTSYWWAVISMT. Residues 417-422 carry the Selectivity filter motif; that stretch reads TVGYGD. The stretch at 417–424 is an intramembrane region; the sequence is TVGYGDMV. The Extracellular portion of the chain corresponds to 425–431; that stretch reads PRSIPGQ. The chain crosses the membrane as a helical span at residues 432–460; sequence VVALSSILSGILLMAFPVTSIFHTFSRSY. At 461–518 the chain is on the cytoplasmic side; it reads SELKEQQQRAASRQMHQLEESTKLAGGGSSQWITAASPPDAAREDGRPELDQEAKRSC. Residues 473-518 are disordered; that stretch reads RQMHQLEESTKLAGGGSSQWITAASPPDAAREDGRPELDQEAKRSC. Basic and acidic residues predominate over residues 501 to 518; that stretch reads AAREDGRPELDQEAKRSC.

Belongs to the potassium channel family. G (TC 1.A.1.2) subfamily. Kv6.2/KCNG2 sub-subfamily. As to quaternary structure, heterodimer with KCNB1.

It localises to the cell membrane. Functionally, regulatory alpha-subunit of the voltage-gated potassium (Kv) channel which, when coassembled with KCNB1, can modulate the kinetics and conductance-voltage relationship. Modulates channel activity by shifting the threshold and the half-maximal activation to more negative values. Potassium channel subunit that does not form functional channels by itself. The protein is Voltage-gated potassium channel regulatory subunit KCNG2 of Gallus gallus (Chicken).